We begin with the raw amino-acid sequence, 505 residues long: Alpha-1-syntrophin (505 aa).

Residues 1–77 (MASGRRAPRT…AEPGAASPPL (77 aa)) form a disordered region. 2 PH domains span residues 6–269 (RAPR…AQVN) and 293–401 (DIKR…DGCH). Residues 87–170 (RVTVRKADAG…EVVLEVKYMK (84 aa)) enclose the PDZ domain. Phosphoserine is present on residues Ser101, Ser184, Ser189, Ser193, and Ser200. The segment at 180 to 211 (ASGTSVGWDSPPASPLQRQPSSPGPPPRDLRD) is disordered. Residues 449 to 505 (PFEKLQMSSDDGASLLFLDFGGAEGEIQLDLHSCPKTMVFIIHSFLSAKVTRLGLLA) enclose the SU domain. The segment at 483-505 (PKTMVFIIHSFLSAKVTRLGLLA) is calmodulin-binding.

Belongs to the syntrophin family. Monomer and homodimer. Interacts with the dystrophin related protein DTNA; SGCG of the dystrophin glycoprotein complex; NOS1; GRB2; GA; TGFA; MAPK12 and the sodium channel proteins SCN4A and SCN5A. Interacts with the dystrophin protein DMD in a calmodulin dependent manner and with related protein UTRN; SGCA of the dystrophin glycoprotein complex; F-actin; calmodulin and with the other members of the syntrophin family SNTB1 and SNTB2. Interacts with MYOC; regulates muscle hypertrophy. Interacts with DTNB. Phosphorylated by CaM-kinase II. Phosphorylation may inhibit the interaction with DMD.

It localises to the cell membrane. Its subcellular location is the sarcolemma. It is found in the cell junction. The protein resides in the cytoplasm. The protein localises to the cytoskeleton. Adapter protein that binds to and probably organizes the subcellular localization of a variety of membrane proteins. May link various receptors to the actin cytoskeleton and the extracellular matrix via the dystrophin glycoprotein complex. Plays an important role in synapse formation and in the organization of UTRN and acetylcholine receptors at the neuromuscular synapse. Binds to phosphatidylinositol 4,5-bisphosphate. This chain is Alpha-1-syntrophin (SNTA1), found in Bos taurus (Bovine).